The following is a 368-amino-acid chain: Endophilin-A2 (368 aa).

The tract at residues methionine 1 to valine 21 is membrane-binding amphipathic helix. Residues serine 18–serine 249 form the BAR domain. Residues proline 60–proline 87 are required for dimerization upon membrane association. A coiled-coil region spans residues aspartate 180–arginine 250. The tract at residues leucine 218–glutamate 254 is interaction with ARC. Residues arginine 243–proline 309 are disordered. Residues arginine 245–glutamate 261 show a composition bias toward basic and acidic residues. A Phosphoserine modification is found at serine 288. Threonine 298 is subject to Phosphothreonine. One can recognise an SH3 domain in the interval leucine 306–proline 365. Residue tyrosine 315 is modified to Phosphotyrosine.

This sequence belongs to the endophilin family. As to quaternary structure, interacts with ARC, SYNJ1 and DNM1. Interacts with PDCD6IP. Interacts with BIN2. In terms of tissue distribution, detected in brain and testis (at protein level). Ubiquitous.

The protein resides in the cytoplasm. The protein localises to the early endosome membrane. Its subcellular location is the cell projection. It is found in the podosome. In terms of biological role, implicated in endocytosis. May recruit other proteins to membranes with high curvature. This chain is Endophilin-A2 (Sh3gl1), found in Rattus norvegicus (Rat).